The following is a 304-amino-acid chain: Uricase (304 aa).

A2 carries the N-acetylalanine modification. N6-acetyllysine; alternate occurs at positions 10 and 23. 2 positions are modified to N6-succinyllysine; alternate: K10 and K23. K23 (charge relay system) is an active-site residue. N6-acetyllysine is present on residues K27 and K36. S39 and S63 each carry phosphoserine. T68 acts as the Charge relay system in catalysis. 2 residues coordinate urate: T68 and D69. N6-acetyllysine is present on residues K118, K122, and K164. F170 is a urate binding site. N6-acetyllysine is present on residues K175 and K185. R187 lines the urate pocket. Residues K221 and K228 each carry the N6-acetyllysine; alternate modification. K221 and K228 each carry N6-succinyllysine; alternate. S232 is subject to Phosphoserine. 3 residues coordinate urate: V235, Q236, and N262. The active-site Charge relay system is the H264. K278 carries the N6-acetyllysine modification. The residue at position 289 (Y289) is a Phosphotyrosine. Positions 302–304 (SKL) match the Microbody targeting signal motif.

It belongs to the uricase family.

The protein localises to the peroxisome. It carries out the reaction urate + O2 + H2O = 5-hydroxyisourate + H2O2. It functions in the pathway purine metabolism; urate degradation; (S)-allantoin from urate: step 1/3. In terms of biological role, catalyzes the oxidation of uric acid to 5-hydroxyisourate, which is further processed to form (S)-allantoin. The polypeptide is Uricase (UOX) (Canis lupus familiaris (Dog)).